Consider the following 1649-residue polypeptide: eIF-2-alpha kinase GCN2 (1649 aa).

3 disordered regions span residues 1-25, 138-158, and 227-256; these read MAGG…RQDH, NKPP…QEEQ, and HGGS…YSVC. An RWD domain is found at 25–137; that stretch reads HELQALEAIY…YHVQSFLSEH (113 aa). Positions 146-205 form a coiled coil; it reads HEEMLERRAQEEQQRLLEAKRKEEQEQREILHEIQRRKEEIKEEKKRKEMAKQERLEIAS. S230 carries the post-translational modification Phosphoserine. Basic residues predominate over residues 237–249; the sequence is GKHRANSSGRSRR. 2 Protein kinase domains span residues 296–539 and 590–1001; these read VYNA…HSFI and FEEL…SELL. ATP contacts are provided by residues 596 to 604 and K619; that span reads LGKGAFGAV. Disordered regions lie at residues 660–750 and 766–788; these read ERPA…QSFL and ENSK…ESEP. Residue T667 is modified to Phosphothreonine. Over residues 705–717 the composition is skewed to polar residues; sequence LSSSVEWSTSGER. Residues 731–740 are compositionally biased toward acidic residues; the sequence is SDDEDDDEDE. Positions 778–787 are enriched in basic and acidic residues; that stretch reads NEKNGCHESE. The Proton acceptor role is filled by D848. T871 carries the post-translational modification Phosphothreonine. A phosphothreonine; by autocatalysis mark is found at T899 and T904. The histidyl-tRNA synthetase-like stretch occupies residues 1022–1493; the sequence is VDGKAYRTMM…DHVLQKLRTK (472 aa). An N6-acetyllysine modification is found at K1259.

This sequence belongs to the protein kinase superfamily. Ser/Thr protein kinase family. GCN2 subfamily. In terms of assembly, homodimer; homodimerization is important for kinase activation by uncharged tRNAs. Interacts with GCN1; this interaction stimulates EIF2AK4/GCN2 kinase activity and is impaired by IMPACT upon a variety of stress conditions, such as amino acid depletion, UV-C irradiation, proteasome inhibitor treatment and glucose deprivation. Interacts with DNAJC3; this interaction inhibits EIF2AK4/GCN2 kinase activity during endoplasmic reticulum (ER), hypothermic and amino acid-starving stress conditions. Interacts with MAP3K20; activates EIF2AK4/GCN2 kinase activity in response to moderate ribotoxic stress. (Microbial infection) Interacts with hepatitis E virus (HEV) ORF1 protease; this interaction inhibits dimerization of EIF2AK4 and prevents EIF2AK4-mediated phosphorylation of EIF2A. Autophosphorylated; autophosphorylation on Thr-899 is increased upon amino acid starvation and in UV irradiation cells and inhibited in presence of IMPACT. As to expression, widely expressed. Expressed in lung, smooth muscle cells and macrophages.

It localises to the cytoplasm. It catalyses the reaction L-seryl-[protein] + ATP = O-phospho-L-seryl-[protein] + ADP + H(+). It carries out the reaction L-threonyl-[protein] + ATP = O-phospho-L-threonyl-[protein] + ADP + H(+). In terms of biological role, metabolic-stress sensing protein kinase that phosphorylates the alpha subunit of eukaryotic translation initiation factor 2 (EIF2S1/eIF-2-alpha) in response to low amino acid availability. Plays a role as an activator of the integrated stress response (ISR) required for adaptation to amino acid starvation. EIF2S1/eIF-2-alpha phosphorylation in response to stress converts EIF2S1/eIF-2-alpha into a global protein synthesis inhibitor, leading to a global attenuation of cap-dependent translation, and thus to a reduced overall utilization of amino acids, while concomitantly initiating the preferential translation of ISR-specific mRNAs, such as the transcriptional activator ATF4, and hence allowing ATF4-mediated reprogramming of amino acid biosynthetic gene expression to alleviate nutrient depletion. Binds uncharged tRNAs. Required for the translational induction of protein kinase PRKCH following amino acid starvation. Involved in cell cycle arrest by promoting cyclin D1 mRNA translation repression after the unfolded protein response pathway (UPR) activation or cell cycle inhibitor CDKN1A/p21 mRNA translation activation in response to amino acid deprivation. Plays a role in the consolidation of synaptic plasticity, learning as well as formation of long-term memory. Plays a role in neurite outgrowth inhibition. Plays a proapoptotic role in response to glucose deprivation. Promotes global cellular protein synthesis repression in response to UV irradiation independently of the stress-activated protein kinase/c-Jun N-terminal kinase (SAPK/JNK) and p38 MAPK signaling pathways. Plays a role in the antiviral response against alphavirus infection; impairs early viral mRNA translation of the incoming genomic virus RNA, thus preventing alphavirus replication. Its function is as follows. (Microbial infection) Plays a role in modulating the adaptive immune response to yellow fever virus infection; promotes dendritic cells to initiate autophagy and antigene presentation to both CD4(+) and CD8(+) T-cells under amino acid starvation. The sequence is that of eIF-2-alpha kinase GCN2 from Homo sapiens (Human).